The following is a 249-amino-acid chain: SRR1-like protein (249 aa).

The disordered stretch occupies residues 1 to 40 (MAAAALEPWSAVAPRRRKRAAGRRPRPGEGPRAEPEADGE). The segment covering 14–25 (PRRRKRAAGRRP) has biased composition (basic residues). A compositionally biased stretch (basic and acidic residues) spans 26-40 (RPGEGPRAEPEADGE).

Belongs to the SRR1 family.

Its subcellular location is the cytoplasm. Its function is as follows. Plays a role in the regulation of heme biosynthesis and in the regulation of the expression of core clock genes. In Mus musculus (Mouse), this protein is SRR1-like protein (Srrd).